The chain runs to 1224 residues: Protein transport protein sec31 (1224 aa).

WD repeat units lie at residues 18 to 57 (GVND…QKPV), 61 to 104 (DVKT…KSDE), 114 to 155 (SENG…QPFA), 160 to 200 (NRSS…QVLN), 211 to 254 (AATG…VPQN), 258 to 300 (GHQK…GSFP), and 302 to 341 (SGNW…TDKS). A WD 8; interaction with sec13 repeat occupies 388–410 (RFGFPNKIVSFSPNSKEVTITSA). Disordered regions lie at residues 480-512 (PKND…NENY), 840-866 (SSHI…NDAP), and 879-1116 (SMAP…AGDR). Positions 495 to 510 (KDSTTPNELSKNANNE) are enriched in polar residues. The residue at position 499 (Thr-499) is a Phosphothreonine. 4 stretches are compositionally biased toward low complexity: residues 914-923 (ASMTASAPAI), 960-976 (VAPQ…SSSP), 1035-1065 (PPTV…PPVS), and 1093-1107 (ATSA…STSA). Ser-1042 and Ser-1044 each carry phosphoserine.

The protein belongs to the WD repeat SEC31 family. In terms of assembly, the COPII coat is composed of at least 5 proteins: the sec23/24 complex, the sec13/31 complex, and the protein sar1. sec13 and sec31 make a 2:2 tetramer that forms the edge element of the COPII outer coat. The tetramer self-assembles in multiple copies to form the complete polyhedral cage. Interacts (via WD 8) with sec13.

The protein localises to the cytoplasmic vesicle. The protein resides in the COPII-coated vesicle membrane. It is found in the endoplasmic reticulum membrane. Component of the coat protein complex II (COPII) which promotes the formation of transport vesicles from the endoplasmic reticulum (ER). The coat has two main functions, the physical deformation of the endoplasmic reticulum membrane into vesicles and the selection of cargo molecules. The polypeptide is Protein transport protein sec31 (sec31) (Schizosaccharomyces pombe (strain 972 / ATCC 24843) (Fission yeast)).